The primary structure comprises 383 residues: Lipid-A-disaccharide synthase (383 aa).

This sequence belongs to the LpxB family.

It catalyses the reaction a lipid X + a UDP-2-N,3-O-bis[(3R)-3-hydroxyacyl]-alpha-D-glucosamine = a lipid A disaccharide + UDP + H(+). Its pathway is bacterial outer membrane biogenesis; LPS lipid A biosynthesis. Condensation of UDP-2,3-diacylglucosamine and 2,3-diacylglucosamine-1-phosphate to form lipid A disaccharide, a precursor of lipid A, a phosphorylated glycolipid that anchors the lipopolysaccharide to the outer membrane of the cell. This chain is Lipid-A-disaccharide synthase, found in Anaeromyxobacter dehalogenans (strain 2CP-C).